Reading from the N-terminus, the 288-residue chain is S-methyl-5'-thioadenosine phosphorylase (288 aa).

Residues serine 12, 54 to 55 (RH), and 87 to 88 (SA) contribute to the phosphate site. Methionine 186 is a substrate binding site. Residue threonine 187 participates in phosphate binding. 210 to 212 (DYD) is a substrate binding site.

Belongs to the PNP/MTAP phosphorylase family. MTAP subfamily. In terms of assembly, homohexamer. Dimer of a homotrimer.

The catalysed reaction is S-methyl-5'-thioadenosine + phosphate = 5-(methylsulfanyl)-alpha-D-ribose 1-phosphate + adenine. It participates in amino-acid biosynthesis; L-methionine biosynthesis via salvage pathway; S-methyl-5-thio-alpha-D-ribose 1-phosphate from S-methyl-5'-thioadenosine (phosphorylase route): step 1/1. In terms of biological role, catalyzes the reversible phosphorylation of S-methyl-5'-thioadenosine (MTA) to adenine and 5-methylthioribose-1-phosphate. Involved in the breakdown of MTA, a major by-product of polyamine biosynthesis. Responsible for the first step in the methionine salvage pathway after MTA has been generated from S-adenosylmethionine. Has broad substrate specificity with 6-aminopurine nucleosides as preferred substrates. In Chloroflexus aurantiacus (strain ATCC 29366 / DSM 635 / J-10-fl), this protein is S-methyl-5'-thioadenosine phosphorylase.